The chain runs to 709 residues: Heme/hemopexin utilization protein C (709 aa).

The first 21 residues, 1 to 21 (MRFSKLSLAITTTLVTANALA), serve as a signal peptide directing secretion. One can recognise a TBDR plug domain in the interval 36-147 (DPSRFTYTPQ…LGGVVAMRTP (112 aa)). Residues 158-709 (KFGVKIRQGY…NAKISAVYSF (552 aa)) enclose the TBDR beta-barrel domain. The short motif at 692-709 (SLMEGTGRNAKISAVYSF) is the TonB C-terminal box element.

Belongs to the TonB-dependent receptor family.

The protein localises to the cell outer membrane. Required for utilization of free heme at low concentrations. This Haemophilus influenzae (strain 86-028NP) protein is Heme/hemopexin utilization protein C (hxuC).